Reading from the N-terminus, the 136-residue chain is Small ribosomal subunit protein uS8c (136 aa).

It belongs to the universal ribosomal protein uS8 family. As to quaternary structure, part of the 30S ribosomal subunit.

The protein localises to the plastid. The protein resides in the chloroplast. Functionally, one of the primary rRNA binding proteins, it binds directly to 16S rRNA central domain where it helps coordinate assembly of the platform of the 30S subunit. The chain is Small ribosomal subunit protein uS8c (rps8) from Tetradesmus obliquus (Green alga).